The chain runs to 249 residues: Type III pantothenate kinase (249 aa).

Residue 6-13 (DIGNSRTK) participates in ATP binding. Residues Tyr-89 and 96-99 (GIDR) contribute to the substrate site. Asp-98 functions as the Proton acceptor in the catalytic mechanism. Asp-119 provides a ligand contact to K(+). Thr-122 is a binding site for ATP. Thr-174 serves as a coordination point for substrate.

Belongs to the type III pantothenate kinase family. Homodimer. It depends on NH4(+) as a cofactor. K(+) is required as a cofactor.

Its subcellular location is the cytoplasm. The catalysed reaction is (R)-pantothenate + ATP = (R)-4'-phosphopantothenate + ADP + H(+). The protein operates within cofactor biosynthesis; coenzyme A biosynthesis; CoA from (R)-pantothenate: step 1/5. Its function is as follows. Catalyzes the phosphorylation of pantothenate (Pan), the first step in CoA biosynthesis. The polypeptide is Type III pantothenate kinase (Colwellia psychrerythraea (strain 34H / ATCC BAA-681) (Vibrio psychroerythus)).